The chain runs to 433 residues: MAIIEEARSGQITDEMKEISKLEGIPVEKVRNRISECKIILIRNAKYPSKKLVPIGKGLTTKVNINIGTSDEVVNLQMELEKVKVANRWGDTLMDLSTGGDLDDIRREIIRASELPVGTVPVYQVFIESFKKKSGGAYFTEDELLSTVEKHLKDGVAFMTIHAGITKELAIRALKSNRIIPIVSRGGDMIAGWMIHNNSENPYRKHWGYLLEMFKEYDAVISLGDALRPGATGDAHDEFQVGELLETARLVKSALKEGVQVMVEGPGHVPLNEIAWDVKLMKKLTGGVPYYVLGPLPIDVGAPYDHIASAIGAAISSAAGADLLCYLTPAEHLGLPTVKQVEEGAIAYRIAAHAGDVVKLGRRVRKWDDEVSYYRGKLEWDNMISRLIDPQRAYQVYTQFGIPKVKACTMCGGYCPMMWAMDQVRKIGSSSSL.

Substrate contacts are provided by residues asparagine 66, methionine 94, tyrosine 123, histidine 162, 184–186 (SRG), 225–228 (DALR), and glutamate 264. Residue histidine 268 participates in Zn(2+) binding. Substrate is bound at residue tyrosine 291. Histidine 332 lines the Zn(2+) pocket. The [4Fe-4S] cluster site is built by cysteine 408, cysteine 411, and cysteine 415.

Belongs to the ThiC family. It depends on [4Fe-4S] cluster as a cofactor.

The catalysed reaction is 5-amino-1-(5-phospho-beta-D-ribosyl)imidazole + S-adenosyl-L-methionine = 4-amino-2-methyl-5-(phosphooxymethyl)pyrimidine + CO + 5'-deoxyadenosine + formate + L-methionine + 3 H(+). It functions in the pathway cofactor biosynthesis; thiamine diphosphate biosynthesis. Catalyzes the synthesis of the hydroxymethylpyrimidine phosphate (HMP-P) moiety of thiamine from aminoimidazole ribotide (AIR) in a radical S-adenosyl-L-methionine (SAM)-dependent reaction. The chain is Phosphomethylpyrimidine synthase 1 from Saccharolobus solfataricus (strain ATCC 35092 / DSM 1617 / JCM 11322 / P2) (Sulfolobus solfataricus).